Here is a 513-residue protein sequence, read N- to C-terminus: EGF-like domain-containing protein 1 (513 aa).

The signal sequence occupies residues M1–A21. The region spanning P72 to E108 is the EGF-like domain. 3 disulfides stabilise this stretch: C76/C86, C80/C96, and C98/C107. The ZP domain maps to E115 to S364. The interval S356–A411 is disordered. Pro residues predominate over residues N375 to N396. N-linked (GlcNAc...) asparagine glycosylation is found at N438 and N503.

Component of the acid-insoluble organic matrix of calcified layers of the shell (at protein level).

The protein resides in the secreted. The protein is EGF-like domain-containing protein 1 of Lottia gigantea (Giant owl limpet).